We begin with the raw amino-acid sequence, 422 residues long: Receptor homology region, transmembrane domain- and RING domain-containing protein 3 (422 aa).

The first 22 residues, 1–22 (MNLVVLLILTLLLFIVSYVVDA), serve as a signal peptide directing secretion. The Lumenal segment spans residues 23-168 (GQVILVDSNI…NTEDSVWSLY (146 aa)). The N-linked (GlcNAc...) asparagine glycan is linked to Asn31. A disulfide bridge connects residues Cys64 and Cys89. Residues 81 to 146 (LVLIIRGGCS…RAGEMLKKYA (66 aa)) form the PA domain. Residues 169–189 (ASIALILSLAIFCVMVTCVFF) form a helical membrane-spanning segment. Topologically, residues 190–422 (YRYCSTIRNS…HFASAHSLPD (233 aa)) are cytoplasmic. An RING-type; atypical zinc finger spans residues 232-274 (CAICLEDYIVGDKLRVLPCSHKFHVACVDSWLISWRTFCPVCK). Positions 344–368 (LRRQASPLQSSSQRSHLSMKSSHSL) are disordered. A compositionally biased stretch (polar residues) spans 349–368 (SPLQSSSQRSHLSMKSSHSL).

Its subcellular location is the prevacuolar compartment membrane. The protein localises to the protein storage vacuole membrane. Functionally, involved in the trafficking of vacuolar proteins. May function as a sorting receptor for protein trafficking to the protein storage vacuole (PSV). The polypeptide is Receptor homology region, transmembrane domain- and RING domain-containing protein 3 (RMR3) (Arabidopsis thaliana (Mouse-ear cress)).